A 1244-amino-acid chain; its full sequence is SWI/SNF chromatin remodeling complex subunit swsn-7 (1244 aa).

Residues 24–116 enclose the ARID domain; the sequence is QRKMAEFYNS…YLSKFEQVET (93 aa). Positions 486 to 496 are enriched in polar residues; sequence FTQGSNQQQNP. Disordered stretches follow at residues 486–534, 556–583, and 597–619; these read FTQG…GAAP, NREQ…ILAH, and DRRT…ESQL. Residues 497-508 are compositionally biased toward low complexity; that stretch reads HHSQGGHQLGHS. Residues 556-566 show a composition bias toward polar residues; that stretch reads NREQYSTQSSQ. Pro residues predominate over residues 567–578; sequence PHPPHTNVPPSP. The segment covering 610–619 has biased composition (polar residues); sequence PSTNSGESQL. Residues 623–697 constitute a DNA-binding region (RFX-type winged-helix); sequence TEKWIRQNCV…IVAQGIRLIR (75 aa). The interval 1134 to 1244 is disordered; it reads EEEQQKMLSE…TTPVRAGAGI (111 aa). The span at 1142 to 1158 shows a compositional bias: low complexity; that stretch reads SEVPSSASLSSMAGSSS. Composition is skewed to polar residues over residues 1159–1186 and 1194–1212; these read QLPT…SNKP and LNFS…FTAG. Residues 1220–1231 show a composition bias toward low complexity; sequence PIQQHIPSQPSP.

As to quaternary structure, component of the SWI/SNF-B (PBAF) chromatin remodeling complex.

The protein localises to the nucleus. Functionally, involved in transcriptional activation and repression of select genes by chromatin remodeling (alteration of DNA-nucleosome topology). Required for the stability of the SWI/SNF chromatin remodeling complex SWI/SNF-B (PBAF). Required for regulation of a stress response gene network, probably as part of the PBAF complex and perhaps acting in concert with histone demethylase jmjc-1. Binds to the ethanol and stress response elements (ESRE) in the promoter regions of hsp-16.1 and hsp-16.2, probably as part of the PBAF complex. The protein is SWI/SNF chromatin remodeling complex subunit swsn-7 of Caenorhabditis elegans.